Here is a 68-residue protein sequence, read N- to C-terminus: Glucagon-1 (68 aa).

This sequence belongs to the glucagon family.

The protein resides in the secreted. Functionally, promotes hydrolysis of glycogen and lipids, and raises the blood sugar level. In Oncorhynchus kisutch (Coho salmon), this protein is Glucagon-1 (gcg).